The chain runs to 448 residues: Probable glycine dehydrogenase (decarboxylating) subunit 1 (448 aa).

Belongs to the GcvP family. N-terminal subunit subfamily. As to quaternary structure, the glycine cleavage system is composed of four proteins: P, T, L and H. In this organism, the P 'protein' is a heterodimer of two subunits.

The catalysed reaction is N(6)-[(R)-lipoyl]-L-lysyl-[glycine-cleavage complex H protein] + glycine + H(+) = N(6)-[(R)-S(8)-aminomethyldihydrolipoyl]-L-lysyl-[glycine-cleavage complex H protein] + CO2. Its function is as follows. The glycine cleavage system catalyzes the degradation of glycine. The P protein binds the alpha-amino group of glycine through its pyridoxal phosphate cofactor; CO(2) is released and the remaining methylamine moiety is then transferred to the lipoamide cofactor of the H protein. The protein is Probable glycine dehydrogenase (decarboxylating) subunit 1 of Listeria monocytogenes serotype 4b (strain CLIP80459).